An 88-amino-acid polypeptide reads, in one-letter code: DNA-directed RNA polymerase subunit omega (88 aa).

This sequence belongs to the RNA polymerase subunit omega family. In terms of assembly, the RNAP catalytic core consists of 2 alpha, 1 beta, 1 beta' and 1 omega subunit. When a sigma factor is associated with the core the holoenzyme is formed, which can initiate transcription.

The catalysed reaction is RNA(n) + a ribonucleoside 5'-triphosphate = RNA(n+1) + diphosphate. Functionally, promotes RNA polymerase assembly. Latches the N- and C-terminal regions of the beta' subunit thereby facilitating its interaction with the beta and alpha subunits. The sequence is that of DNA-directed RNA polymerase subunit omega from Actinobacillus succinogenes (strain ATCC 55618 / DSM 22257 / CCUG 43843 / 130Z).